The sequence spans 203 residues: ATP-dependent Clp protease proteolytic subunit (203 aa).

Catalysis depends on Ser107, which acts as the Nucleophile. His132 is an active-site residue.

This sequence belongs to the peptidase S14 family. Fourteen ClpP subunits assemble into 2 heptameric rings which stack back to back to give a disk-like structure with a central cavity, resembling the structure of eukaryotic proteasomes.

The protein localises to the cytoplasm. It catalyses the reaction Hydrolysis of proteins to small peptides in the presence of ATP and magnesium. alpha-casein is the usual test substrate. In the absence of ATP, only oligopeptides shorter than five residues are hydrolyzed (such as succinyl-Leu-Tyr-|-NHMec, and Leu-Tyr-Leu-|-Tyr-Trp, in which cleavage of the -Tyr-|-Leu- and -Tyr-|-Trp bonds also occurs).. Cleaves peptides in various proteins in a process that requires ATP hydrolysis. Has a chymotrypsin-like activity. Plays a major role in the degradation of misfolded proteins. This is ATP-dependent Clp protease proteolytic subunit from Shewanella denitrificans (strain OS217 / ATCC BAA-1090 / DSM 15013).